The chain runs to 242 residues: Phosphomannomutase 2 (242 aa).

Catalysis depends on Asp-8, which acts as the Nucleophile. Mg(2+) is bound by residues Asp-8 and Asp-10. Asp-10 (proton donor/acceptor) is an active-site residue. Alpha-D-mannose 1-phosphate is bound by residues Arg-17, Arg-119, Arg-130, and Arg-137. The residue at position 145 (Lys-145) is an N6-acetyllysine. Ser-175 and Asp-177 together coordinate alpha-D-mannose 1-phosphate. Residues Asp-205, Phe-217, Asp-219, and Thr-222 each coordinate Mg(2+).

Belongs to the eukaryotic PMM family. As to quaternary structure, homodimer.

The protein localises to the cytoplasm. It carries out the reaction alpha-D-mannose 1-phosphate = D-mannose 6-phosphate. It participates in nucleotide-sugar biosynthesis; GDP-alpha-D-mannose biosynthesis; alpha-D-mannose 1-phosphate from D-fructose 6-phosphate: step 2/2. Its function is as follows. Involved in the synthesis of the GDP-mannose and dolichol-phosphate-mannose required for a number of critical mannosyl transfer reactions. This Mus musculus (Mouse) protein is Phosphomannomutase 2 (Pmm2).